The following is a 96-amino-acid chain: Small ribosomal subunit protein bS6 (96 aa).

The protein belongs to the bacterial ribosomal protein bS6 family.

Functionally, binds together with bS18 to 16S ribosomal RNA. The sequence is that of Small ribosomal subunit protein bS6 from Acidothermus cellulolyticus (strain ATCC 43068 / DSM 8971 / 11B).